A 518-amino-acid polypeptide reads, in one-letter code: Glucose-6-phosphate 1-dehydrogenase (518 aa).

NADP(+)-binding positions include 36-43, arginine 70, and lysine 169; that span reads GASGDLAK. Residues lysine 169, 199 to 203, glutamate 237, and aspartate 256 contribute to the D-glucose 6-phosphate site; that span reads HYLGK. The active-site Proton acceptor is histidine 261. Residue arginine 356 coordinates NADP(+). Positions 359 and 364 each coordinate D-glucose 6-phosphate. 3 residues coordinate NADP(+): lysine 365, arginine 369, and arginine 392. Glutamine 394 lines the D-glucose 6-phosphate pocket. NADP(+) is bound by residues 400–402, 420–422, arginine 486, tyrosine 502, and tryptophan 508; these read YFK and DLT.

This sequence belongs to the glucose-6-phosphate dehydrogenase family.

It localises to the cytoplasm. The protein localises to the cytosol. It catalyses the reaction D-glucose 6-phosphate + NADP(+) = 6-phospho-D-glucono-1,5-lactone + NADPH + H(+). It participates in carbohydrate degradation; pentose phosphate pathway; D-ribulose 5-phosphate from D-glucose 6-phosphate (oxidative stage): step 1/3. Its function is as follows. Cytosolic glucose-6-phosphate dehydrogenase that catalyzes the first and rate-limiting step of the oxidative branch within the pentose phosphate pathway/shunt, an alternative route to glycolysis for the dissimilation of carbohydrates and a major source of reducing power and metabolic intermediates for fatty acid and nucleic acid biosynthetic processes. This chain is Glucose-6-phosphate 1-dehydrogenase (Zw), found in Drosophila yakuba (Fruit fly).